Reading from the N-terminus, the 327-residue chain is Cell surface glycoprotein CD200 receptor 1 (327 aa).

The signal sequence occupies residues 1-23 (MLCFWRTSHVAVLLIWGVFAAES). At 24–239 (SCPDKNQTMQ…GRGGDQLLGS (216 aa)) the chain is on the extracellular side. Residues 26–145 (PDKNQTMQNN…GNFQNIYDLQ (120 aa)) form the Ig-like V-type domain. 8 N-linked (GlcNAc...) asparagine glycosylation sites follow: Asn29, Asn34, Asn43, Asn96, Asn159, Asn187, Asn192, and Asn222. 2 cysteine pairs are disulfide-bonded: Cys58/Cys129 and Cys81/Cys97. One can recognise an Ig-like C2-type domain in the interval 147–226 (LVPPEVTHFP…HLTTGNQSLS (80 aa)). Disulfide bonds link Cys164/Cys213 and Cys183/Cys201. The helical transmembrane segment at 240-260 (YIQYIIPSIIILIIIGCICLL) threads the bilayer. Residues 261 to 327 (KISGCRKCKL…DCLTLSAMGI (67 aa)) lie on the Cytoplasmic side of the membrane.

It belongs to the CD200R family. In terms of assembly, CD200 and CD200R1 interact via their respective N-terminal Ig-like domains. Post-translationally, phosphorylated on tyrosine residues. In terms of processing, highly N-glycosylated. In terms of tissue distribution, restricted to cells of the myeloid lineage.

It localises to the cell membrane. Its function is as follows. Inhibitory receptor for the CD200/OX2 cell surface glycoprotein. Limits inflammation by inhibiting the expression of pro-inflammatory molecules including TNF-alpha, interferons, and inducible nitric oxide synthase (iNOS) in response to selected stimuli. The chain is Cell surface glycoprotein CD200 receptor 1 (Cd200r1) from Rattus norvegicus (Rat).